We begin with the raw amino-acid sequence, 212 residues long: Protein YIPF5 homolog (212 aa).

Residues 1 to 79 (MNNNNSFNFI…KKIDSHIMDD (79 aa)) lie on the Cytoplasmic side of the membrane. A helical membrane pass occupies residues 80-100 (TDLGGPILFGLLLGFSLLMSG). Position 101 (K101) is a topological domain, lumenal. A helical membrane pass occupies residues 102–122 (IQFGYIYGLGLIGCVSMYIVL). Residues 123 to 128 (NLMSEK) lie on the Cytoplasmic side of the membrane. The chain crosses the membrane as a helical span at residues 129 to 149 (GIDIYRVISVLGYCLLPMIFL). At 150-163 (SFTSLIININGMVG) the chain is on the lumenal side. The chain crosses the membrane as a helical span at residues 164–186 (YILIGFAIVWSTYSASKMFVKVL). Residues 187–191 (SMIDQ) lie on the Cytoplasmic side of the membrane. Residues 192–212 (RILVAYPVGLLYTGFALITAF) form a helical membrane-spanning segment.

It belongs to the YIP1 family.

The protein resides in the endoplasmic reticulum membrane. It is found in the golgi apparatus. It localises to the cis-Golgi network membrane. In terms of biological role, plays a role in transport between endoplasmic reticulum and Golgi. The chain is Protein YIPF5 homolog (yipf5) from Dictyostelium discoideum (Social amoeba).